Reading from the N-terminus, the 713-residue chain is MPSLSQPFRLATLPKIASLSNFSLQADYVQVADGTFNESTNNITLGISGSSISQYIINPTPKLTFDYPIPSTNIITACNAEKGQANIDGNIEASTDDEANNEKTINTQKKRNVEIWAFGLMVNKGNYTLNVITKALEDTTDTSNDHLSESDIDNKAYTGSDEFLSQYKIKAKAKVMSIKIDTKNSLVIAILQNGLIEIFDFKLTLLHSFDISYDNLKYAKWFTENGTEYVFVLCPLQDDKVCYKLLELTDCGSGESSPIKELSSTIIEGFSFENSKLCYQFGKLYKLNQGKIYIYSLPHCQLQQVIEFPMVDKLSPGDDLISFQPVSVNRVLLTVNNVIYLLDLLHCSTLSQRELTHVKTFQLLKSAVINSEKSHNSKTIAIGISTKNGPNPTSSLEIINIDVGTNTLKDSLGKSFQVGNNDSSVILKPLFDDKDINDKRVKCNDVSGDSSVPVLHCNEVIEKLSALQDNDITSFDDIFFKELKIKEEHYTEKDRYISDPGFLNKVLDLIFGKFSGNDYPKTLTFLLTHPLFPLSRTRNLLSLLRDQPRLFKQAIVTCPNLPLNELLEELFSIRNRELLLDISFRILQDFTRDSIKQEMKKLSKLDVQNFIEFITSGGEDSSPECFNPSQSTQLFQLLSLVLDSIGLFSLEGALLENLTLYIDKQVEIAERNTELWNLIDTKGFQHGFASSTFDNGTSQKRALPTYTMEYLDI.

Thr-95 bears the Phosphothreonine mark. Phosphoserine is present on residues Ser-148 and Ser-150.

In terms of assembly, interacts with snoRNA U3. Interacts with MPP10 and UTP25. Component of the ribosomal small subunit (SSU) processome composed of at least 40 protein subunits and snoRNA U3. In the absence of snoRNA3, forms a complex with other t-UTPs. This complex can associate with pre-18S ribosomal RNAs.

It is found in the nucleus. It localises to the nucleolus. Its function is as follows. Involved in nucleolar processing of pre-18S ribosomal RNA. Also has a role in nuclear tRNA export. It acts between the steps of tRNA maturation/aminoacylation and its subsequent translocation out of the nucleus. Required for optimal pre-ribosomal RNA transcription by RNA polymerase I together with a subset of U3 proteins required for transcription (t-UTPs). The sequence is that of U3 small nucleolar RNA-associated protein 8 (UTP8) from Saccharomyces cerevisiae (strain ATCC 204508 / S288c) (Baker's yeast).